A 751-amino-acid polypeptide reads, in one-letter code: uncharacterized protein (751 aa).

The segment at 73-169 (FGVVHSHTPK…PVLIDDDTGE (97 aa)) is disordered. Residues 96–109 (ATSTRRSATAQRAA) show a composition bias toward low complexity. The segment covering 111-120 (LKSSPVDQWS) has biased composition (polar residues).

This is an uncharacterized protein from Invertebrate iridescent virus 3 (IIV-3).